The chain runs to 82 residues: Acyl carrier protein (82 aa).

A Carrier domain is found at 4 to 79 (PEMESRLKKI…DALNYIEQKL (76 aa)). Ser-39 bears the O-(pantetheine 4'-phosphoryl)serine mark.

It belongs to the acyl carrier protein (ACP) family. 4'-phosphopantetheine is transferred from CoA to a specific serine of apo-ACP by AcpS. This modification is essential for activity because fatty acids are bound in thioester linkage to the sulfhydryl of the prosthetic group.

It is found in the cytoplasm. It participates in lipid metabolism; fatty acid biosynthesis. Its function is as follows. Carrier of the growing fatty acid chain in fatty acid biosynthesis. This Roseiflexus sp. (strain RS-1) protein is Acyl carrier protein.